A 425-amino-acid polypeptide reads, in one-letter code: Protein CLP1 homolog (425 aa).

Residues Glu-18, Lys-59, and 121–126 (DVGKST) contribute to the ATP site.

The protein belongs to the Clp1 family. Clp1 subfamily.

The protein resides in the nucleus. Functionally, required for endonucleolytic cleavage during polyadenylation-dependent pre-mRNA 3'-end formation. This Drosophila pseudoobscura pseudoobscura (Fruit fly) protein is Protein CLP1 homolog (cbc).